The following is a 451-amino-acid chain: Lysine histidine transporter-like 3 (451 aa).

Residues methionine 1–tyrosine 40 lie on the Cytoplasmic side of the membrane. Residues serine 41 to methionine 61 traverse the membrane as a helical segment. Residues serine 62–glutamate 63 lie on the Extracellular side of the membrane. A helical transmembrane segment spans residues leucine 64–phenylalanine 84. The Cytoplasmic segment spans residues tryptophan 85–glycine 115. The helical transmembrane segment at leucine 116 to valine 136 threads the bilayer. The Extracellular segment spans residues threonine 137–lysine 159. The chain crosses the membrane as a helical span at residues valine 160–leucine 177. At lysine 178 to serine 182 the chain is on the cytoplasmic side. The chain crosses the membrane as a helical span at residues isoleucine 183–valine 203. Over alanine 204–proline 227 the chain is Extracellular. A helical membrane pass occupies residues leucine 228–leucine 248. Over glutamate 249–glycine 269 the chain is Cytoplasmic. Residues alanine 270–tryptophan 290 traverse the membrane as a helical segment. Topologically, residues threonine 291–glycine 309 are extracellular. The helical transmembrane segment at leucine 310 to alanine 330 threads the bilayer. The Cytoplasmic segment spans residues methionine 331–arginine 358. A helical transmembrane segment spans residues tryptophan 359–leucine 379. A topological domain (extracellular) is located at residue serine 380. Residues phenylalanine 381–isoleucine 401 form a helical membrane-spanning segment. Residues leucine 402 to cysteine 413 are Cytoplasmic-facing. Residues isoleucine 414–leucine 434 traverse the membrane as a helical segment. Residues alanine 435–threonine 451 are Extracellular-facing.

This sequence belongs to the amino acid/polyamine transporter 2 family. Amino acid/auxin permease (AAAP) (TC 2.A.18.2) subfamily.

It localises to the cell membrane. Its function is as follows. Amino acid transporter. This is Lysine histidine transporter-like 3 from Arabidopsis thaliana (Mouse-ear cress).